We begin with the raw amino-acid sequence, 123 residues long: Small ribosomal subunit protein uS12c (123 aa).

The span at 1-20 (MPTIQQLIRNTRQPTQNRTK) shows a compositional bias: polar residues. The disordered stretch occupies residues 1–27 (MPTIQQLIRNTRQPTQNRTKSPALKAC).

Belongs to the universal ribosomal protein uS12 family. As to quaternary structure, part of the 30S ribosomal subunit.

Its subcellular location is the plastid. It localises to the chloroplast. With S4 and S5 plays an important role in translational accuracy. Located at the interface of the 30S and 50S subunits. In Zygnema circumcarinatum (Green alga), this protein is Small ribosomal subunit protein uS12c (rps12).